We begin with the raw amino-acid sequence, 138 residues long: Small ribosomal subunit protein uS12m (138 aa).

Residues 1 to 29 constitute a mitochondrion transit peptide; the sequence is MSWSGLLHGLNTSLTCGPALVPRLWATCS. Residues 36–56 are disordered; it reads MHRLGPPKRPPRKLGPTEGRP.

It belongs to the universal ribosomal protein uS12 family. As to quaternary structure, component of the mitochondrial small ribosomal subunit (mt-SSU). Mature mammalian 55S mitochondrial ribosomes consist of a small (28S) and a large (39S) subunit. The 28S small subunit contains a 12S ribosomal RNA (12S mt-rRNA) and 30 different proteins. The 39S large subunit contains a 16S rRNA (16S mt-rRNA), a copy of mitochondrial valine transfer RNA (mt-tRNA(Val)), which plays an integral structural role, and 52 different proteins.

It is found in the mitochondrion. The sequence is that of Small ribosomal subunit protein uS12m (MRPS12) from Homo sapiens (Human).